Reading from the N-terminus, the 30-residue chain is Cyclotide hyen-K (30 aa).

Positions 1–30 (GIPCGESCIFIPCITTVVGCSCSNKVCYDN) form a cross-link, cyclopeptide (Gly-Asn). 3 cysteine pairs are disulfide-bonded: Cys4–Cys20, Cys8–Cys22, and Cys13–Cys27.

This is a cyclic peptide. As to expression, detected in seeds (at protein level).

Its function is as follows. Probably participates in a plant defense mechanism. This is Cyclotide hyen-K from Pigea enneasperma (Spade flower).